A 40-amino-acid polypeptide reads, in one-letter code: Proteinase inhibitor IIB (40 aa).

Cystine bridges form between Cys-2/Cys-16, Cys-6/Cys-28, and Cys-12/Cys-38.

It belongs to the protease inhibitor I20 (potato type II proteinase inhibitor) family.

Its subcellular location is the secreted. In terms of biological role, inhibits chymotrypsin and subtilisin strongly. The chain is Proteinase inhibitor IIB from Solanum tuberosum (Potato).